We begin with the raw amino-acid sequence, 57 residues long: Large ribosomal subunit protein bL33 (57 aa).

It belongs to the bacterial ribosomal protein bL33 family.

The protein is Large ribosomal subunit protein bL33 of Shewanella amazonensis (strain ATCC BAA-1098 / SB2B).